The following is a 185-amino-acid chain: Elongation factor P (185 aa).

The protein belongs to the elongation factor P family.

The protein resides in the cytoplasm. It participates in protein biosynthesis; polypeptide chain elongation. Functionally, involved in peptide bond synthesis. Stimulates efficient translation and peptide-bond synthesis on native or reconstituted 70S ribosomes in vitro. Probably functions indirectly by altering the affinity of the ribosome for aminoacyl-tRNA, thus increasing their reactivity as acceptors for peptidyl transferase. The polypeptide is Elongation factor P (Trichormus variabilis (strain ATCC 29413 / PCC 7937) (Anabaena variabilis)).